The sequence spans 163 residues: Photosystem II extrinsic protein V (163 aa).

Residues 1 to 26 (MLKRSSWLATLLGLLTVASVSTIVYA) form the signal peptide. The heme c site is built by Cys63, Cys66, His67, and His118.

Belongs to the cytochrome c family. PsbV subfamily. PSII is composed of 1 copy each of membrane proteins PsbA, PsbB, PsbC, PsbD, PsbE, PsbF, PsbH, PsbI, PsbJ, PsbK, PsbL, PsbM, PsbT, PsbY, PsbZ, Psb30/Ycf12, at least 3 peripheral proteins of the oxygen-evolving complex and a large number of cofactors. It forms dimeric complexes. The extrinsic subunits in red algae are PsbO (OEC33), PsbQ', cytochrome c-550 and PsbU. Requires heme c as cofactor.

It is found in the plastid. The protein localises to the chloroplast thylakoid membrane. Its function is as follows. One of the extrinsic, lumenal subunits of photosystem II (PSII). PSII is a light-driven water plastoquinone oxidoreductase, using light energy to abstract electrons from H(2)O, generating a proton gradient subsequently used for ATP formation. The extrinsic proteins stabilize the structure of photosystem II oxygen-evolving complex (OEC), the ion environment of oxygen evolution and protect the OEC against heat-induced inactivation. This is Photosystem II extrinsic protein V from Porphyra purpurea (Red seaweed).